The chain runs to 216 residues: Vacuolar iron transporter homolog 4 (216 aa).

Residues 1–29 (MAATNGDAELTVAEEAKEEEEATDDGGGG) are disordered. Over 1-36 (MAATNGDAELTVAEEAKEEEEATDDGGGGVSSQWLR) the chain is Cytoplasmic. Residues 37–57 (AAVLGASDGLVSTAALMLGIG) traverse the membrane as a helical segment. At 58–65 (AARPADAR) the chain is on the vacuolar side. The helical transmembrane segment at 66–86 (AVLLSGLAGLVAGACSMAIGE) threads the bilayer. The Cytoplasmic segment spans residues 87–134 (YVSVHVQLDVELADLERRRRRGGPAPAGLGLHAAAAAVSRPGQAAAAS). A helical transmembrane segment spans residues 135-155 (ALSFAAGAALPLLAAWFVAGA). Over 156–157 (YR) the chain is Vacuolar. Residues 158-178 (VRVVVVVATASLALAAFGAAG) traverse the membrane as a helical segment. Over 179 to 190 (ARLGRAPGGRAG) the chain is Cytoplasmic. A helical transmembrane segment spans residues 191–211 (LRVVVGGLLAMAATYGVMKLF). At 212 to 216 (RTHGV) the chain is on the vacuolar side.

It belongs to the CCC1 family.

It is found in the vacuole membrane. The catalysed reaction is Fe(2+)(in) = Fe(2+)(out). Its function is as follows. Probable vacuolar iron transporter that may be involved in the regulation of iron distribution throughout the plant. This Oryza sativa subsp. japonica (Rice) protein is Vacuolar iron transporter homolog 4.